Consider the following 557-residue polypeptide: Leucine-rich glioma-inactivated protein 1 (557 aa).

Residues 1 to 34 (MESERSKRMGNACIPLKRIAYFLCLLSALLLTEG) form the signal peptide. The LRRNT domain occupies 35–72 (KKPAKPKCPAVCTCTKDNALCENARSIPRTVPPDVISL). LRR repeat units follow at residues 92-113 (SLQLLLFTSNSFDVISDDAFIG), 116-137 (HLEYLFIENNNIKSISRHTFRG), and 140-161 (SLIHLSLANNNLQTLPKDIFKG). The LRRCT domain occupies 173 to 223 (NSFNCDCKLKWLVEWLGHTNATVEDIYCEGPPEYKKRKINSLSSKDFDCII). N-linked (GlcNAc...) asparagine glycosylation is present at N192. EAR repeat units lie at residues 225 to 267 (EFAK…EWDH), 271 to 313 (TFRN…KRDS), 317 to 364 (KFIK…KWNG), 366 to 415 (GFYS…QWNK), 419 to 462 (LFTN…KWGG), 464 to 506 (SFQD…NWDA), and 510 to 552 (KFVK…KHVI). N-linked (GlcNAc...) asparagine glycosylation occurs at N277. N422 is a glycosylation site (N-linked (GlcNAc...) asparagine).

In terms of assembly, oligomer. Interacts with KCNA1 within a complex containing KCNA1, KCNA4 and KCNAB1. Part of a complex containing ADAM22, DLG4/PSD95 and CACNG2 (stargazin). Can bind to ADAM11 and ADAM23. Glycosylated.

Its subcellular location is the secreted. The protein localises to the synapse. The protein resides in the cytoplasm. In terms of biological role, regulates voltage-gated potassium channels assembled from KCNA1, KCNA4 and KCNAB1. It slows down channel inactivation by precluding channel closure mediated by the KCNAB1 subunit. Ligand for ADAM22 that positively regulates synaptic transmission mediated by AMPA-type glutamate receptors. Plays a role in suppressing the production of MMP1/3 through the phosphatidylinositol 3-kinase/ERK pathway. The chain is Leucine-rich glioma-inactivated protein 1 (LGI1) from Pongo abelii (Sumatran orangutan).